Here is a 107-residue protein sequence, read N- to C-terminus: Putative double-stranded DNA mimic protein HSM_1473 (107 aa).

It belongs to the putative dsDNA mimic protein family.

Functionally, may act as a double-stranded DNA (dsDNA) mimic. Probably regulates the activity of a dsDNA-binding protein. This chain is Putative double-stranded DNA mimic protein HSM_1473, found in Histophilus somni (strain 2336) (Haemophilus somnus).